Consider the following 332-residue polypeptide: Nuclear migration protein nudC (332 aa).

Positions 122-161 (RQQLLDSAGGEPSASNRDGISKPIEKVDDESDKSELGKLM) are disordered. The region spanning 168–259 (CTLENYTWTQ…NKMNWWSRLV (92 aa)) is the CS domain.

This sequence belongs to the nudC family. In terms of assembly, interacts with PCID2.

It localises to the cytoplasm. In terms of biological role, chaperone protein with functions in nuclear localization and cytoplasmic mRNA trafficking. In postmitotic neurons, acts with nudE downstream of dar1 to ensure correct positioning of the nuclei in primary dendrites and as a consequence, is required for determining multipolar neuron morphology. Stabilizes PCID2 in the cytoplasm and thereby is required for promoting cytoplasmic mRNA trafficking. In Drosophila melanogaster (Fruit fly), this protein is Nuclear migration protein nudC.